The chain runs to 119 residues: Ribonuclease P protein component (119 aa).

It belongs to the RnpA family. As to quaternary structure, consists of a catalytic RNA component (M1 or rnpB) and a protein subunit.

It catalyses the reaction Endonucleolytic cleavage of RNA, removing 5'-extranucleotides from tRNA precursor.. Functionally, RNaseP catalyzes the removal of the 5'-leader sequence from pre-tRNA to produce the mature 5'-terminus. It can also cleave other RNA substrates such as 4.5S RNA. The protein component plays an auxiliary but essential role in vivo by binding to the 5'-leader sequence and broadening the substrate specificity of the ribozyme. This Aeromonas salmonicida (strain A449) protein is Ribonuclease P protein component.